We begin with the raw amino-acid sequence, 225 residues long: Adenylate kinase (225 aa).

10–15 is a binding site for ATP; the sequence is GSGKGT. The NMP stretch occupies residues 30-59; it reads ESGAIFRENISKGTEIGKKAKEYIDRGDLV. Residues serine 31, arginine 36, 57–59, 85–88, and glutamine 92 contribute to the AMP site; these read DLV and GFPR. The interval 126 to 165 is LID; it reads GRRLCENDNNHPNNIFIDAIKPDGDKCRVCGGALSARSDD. An ATP-binding site is contributed by arginine 127. 2 residues coordinate AMP: arginine 162 and arginine 174. Residue proline 211 participates in ATP binding.

It belongs to the adenylate kinase family. In terms of assembly, monomer.

It is found in the cytoplasm. It carries out the reaction AMP + ATP = 2 ADP. It participates in purine metabolism; AMP biosynthesis via salvage pathway; AMP from ADP: step 1/1. Functionally, catalyzes the reversible transfer of the terminal phosphate group between ATP and AMP. Plays an important role in cellular energy homeostasis and in adenine nucleotide metabolism. This Desulfatibacillum aliphaticivorans protein is Adenylate kinase.